The following is a 795-amino-acid chain: Protein translocase subunit SecA 2 (795 aa).

ATP contacts are provided by residues glutamine 84, glycine 102–threonine 106, and aspartate 496.

It belongs to the SecA family. As to quaternary structure, monomer and homodimer. Part of the essential Sec protein translocation apparatus which comprises SecA, SecYEG and auxiliary proteins SecDF. Other proteins may also be involved.

The protein resides in the cell membrane. It localises to the cytoplasm. It catalyses the reaction ATP + H2O + cellular proteinSide 1 = ADP + phosphate + cellular proteinSide 2.. Part of the Sec protein translocase complex. Interacts with the SecYEG preprotein conducting channel. Has a central role in coupling the hydrolysis of ATP to the transfer of proteins into and across the cell membrane, serving as an ATP-driven molecular motor driving the stepwise translocation of polypeptide chains across the membrane. In Streptococcus agalactiae serotype V (strain ATCC BAA-611 / 2603 V/R), this protein is Protein translocase subunit SecA 2.